The chain runs to 159 residues: S-ribosylhomocysteine lyase (159 aa).

Fe cation is bound by residues His53, His57, and Cys124.

It belongs to the LuxS family. Homodimer. The cofactor is Fe cation.

It carries out the reaction S-(5-deoxy-D-ribos-5-yl)-L-homocysteine = (S)-4,5-dihydroxypentane-2,3-dione + L-homocysteine. Its function is as follows. Involved in the synthesis of autoinducer 2 (AI-2) which is secreted by bacteria and is used to communicate both the cell density and the metabolic potential of the environment. The regulation of gene expression in response to changes in cell density is called quorum sensing. Catalyzes the transformation of S-ribosylhomocysteine (RHC) to homocysteine (HC) and 4,5-dihydroxy-2,3-pentadione (DPD). The protein is S-ribosylhomocysteine lyase of Porphyromonas gingivalis (strain ATCC 33277 / DSM 20709 / CIP 103683 / JCM 12257 / NCTC 11834 / 2561).